Here is an 87-residue protein sequence, read N- to C-terminus: Defensin-like protein 100 (87 aa).

The first 29 residues, M1–G29, serve as a signal peptide directing secretion. 4 cysteine pairs are disulfide-bonded: C31–C79, C38–C64, C44–C76, and C48–C78.

The protein belongs to the DEFL family.

The protein localises to the secreted. The protein is Defensin-like protein 100 of Arabidopsis thaliana (Mouse-ear cress).